Consider the following 629-residue polypeptide: Phosphoglucomutase, chloroplastic (629 aa).

Residues 1-69 (MSSTYARFDT…SSSSGPIIAG (69 aa)) constitute a chloroplast transit peptide. Positions 94 and 187 each coordinate alpha-D-glucose 1,6-bisphosphate. Catalysis depends on Ser187, which acts as the Phosphoserine intermediate. The Mg(2+) site is built by Ser187, Asp352, Asp354, and Asp356. At Ser187 the chain carries Phosphoserine. Positions 356, 357, 420, 439, 441, and 452 each coordinate alpha-D-glucose 1,6-bisphosphate.

This sequence belongs to the phosphohexose mutase family. As to quaternary structure, monomer. Requires Mg(2+) as cofactor.

The protein resides in the plastid. It localises to the chloroplast. The enzyme catalyses alpha-D-glucose 1-phosphate = alpha-D-glucose 6-phosphate. It carries out the reaction O-phospho-L-seryl-[protein] + alpha-D-glucose 1-phosphate = alpha-D-glucose 1,6-bisphosphate + L-seryl-[protein]. The catalysed reaction is alpha-D-glucose 1,6-bisphosphate + L-seryl-[protein] = O-phospho-L-seryl-[protein] + alpha-D-glucose 6-phosphate. Inhibited by the Calvin cycle intermediates fructose-1,6-bisphosphate and ribulose-1,5-bisphosphate. Functionally, catalyzes the reversible isomerization of alpha-D-glucose 1-phosphate to alpha-D-glucose 6-phosphate. The mechanism proceeds via the intermediate compound alpha-D-glucose 1,6-bisphosphate. This enzyme participates in both the breakdown and synthesis of glucose. This Brassica napus (Rape) protein is Phosphoglucomutase, chloroplastic (PGMP).